The following is a 485-amino-acid chain: GTPase Der (485 aa).

2 EngA-type G domains span residues 3 to 167 and 176 to 349; these read PTIA…PEPE and PVFA…NAAM. Residues 9 to 16, 56 to 60, 119 to 122, 182 to 189, 229 to 233, and 294 to 297 each bind GTP; these read GRPNVGKS, DTGGF, NKGE, DTAGV, and NKWD. The 85-residue stretch at 350 to 434 folds into the KH-like domain; that stretch reads IKMPTPKITR…PLRIQYNVSE (85 aa). Residues 435-485 are disordered; sequence NPYENAEDKPKKKPLRRVSLSNRIEKREGRKEEKNRFKKKTKVSVKKQFSK. The segment covering 457–469 has biased composition (basic and acidic residues); the sequence is RIEKREGRKEEKN. Positions 470–485 are enriched in basic residues; sequence RFKKKTKVSVKKQFSK.

Belongs to the TRAFAC class TrmE-Era-EngA-EngB-Septin-like GTPase superfamily. EngA (Der) GTPase family. Associates with the 50S ribosomal subunit.

Functionally, GTPase that plays an essential role in the late steps of ribosome biogenesis. This Neisseria meningitidis serogroup C / serotype 2a (strain ATCC 700532 / DSM 15464 / FAM18) protein is GTPase Der.